Here is a 657-residue protein sequence, read N- to C-terminus: Glycogen debranching enzyme (657 aa).

Aspartate 336 acts as the Nucleophile in catalysis. Catalysis depends on glutamate 371, which acts as the Proton donor. A compositionally biased stretch (basic and acidic residues) spans 458–467 (NEANGEENRD). A disordered region spans residues 458–479 (NEANGEENRDGTNNNYSNNHGK).

This sequence belongs to the glycosyl hydrolase 13 family.

It catalyses the reaction Hydrolysis of (1-&gt;6)-alpha-D-glucosidic linkages to branches with degrees of polymerization of three or four glucose residues in limit dextrin.. Its pathway is glycan degradation; glycogen degradation. Functionally, removes maltotriose and maltotetraose chains that are attached by 1,6-alpha-linkage to the limit dextrin main chain, generating a debranched limit dextrin. The sequence is that of Glycogen debranching enzyme from Shigella boydii serotype 18 (strain CDC 3083-94 / BS512).